Here is a 591-residue protein sequence, read N- to C-terminus: Vomeromodulin (591 aa).

The signal sequence occupies residues 1 to 18 (MWVLQALAIMLSIQAGTL). The segment at 151–172 (NEGNGDSSKPSSGSKATGGLGQ) is disordered. N-linked (GlcNAc...) asparagine glycans are attached at residues asparagine 421 and asparagine 516.

Post-translationally, N-glycosylated. The N-glycans consist mainly of complex sialylated and fucosylated biantennary structures. In terms of tissue distribution, expressed in lung. Not detected in other tissues tested (at protein level).

It localises to the secreted. This chain is Vomeromodulin, found in Mus musculus (Mouse).